The chain runs to 400 residues: Argininosuccinate synthase (400 aa).

ATP is bound by residues 10-18 (AYSGGVDTS) and A38. L-citrulline is bound at residue Y89. Position 119 (G119) interacts with ATP. Residues T121, N125, and D126 each contribute to the L-aspartate site. N125 lines the L-citrulline pocket. The L-citrulline site is built by R129, S177, E262, and Y274.

Belongs to the argininosuccinate synthase family. Type 1 subfamily. Homotetramer.

It localises to the cytoplasm. It catalyses the reaction L-citrulline + L-aspartate + ATP = 2-(N(omega)-L-arginino)succinate + AMP + diphosphate + H(+). Its pathway is amino-acid biosynthesis; L-arginine biosynthesis; L-arginine from L-ornithine and carbamoyl phosphate: step 2/3. The sequence is that of Argininosuccinate synthase from Trichodesmium erythraeum (strain IMS101).